We begin with the raw amino-acid sequence, 387 residues long: Gamma-butyrobetaine dioxygenase (387 aa).

Positions 38, 40, 43, and 82 each coordinate Zn(2+). Fe cation contacts are provided by histidine 202, aspartate 204, and histidine 347. Phosphoserine is present on serine 351.

The protein belongs to the gamma-BBH/TMLD family. The cofactor is Fe(2+). L-ascorbate is required as a cofactor. In terms of tissue distribution, expressed in the liver and in some extend in the testis and the epididymis.

The protein localises to the cytoplasm. It carries out the reaction 4-(trimethylamino)butanoate + 2-oxoglutarate + O2 = carnitine + succinate + CO2. Its pathway is amine and polyamine biosynthesis; carnitine biosynthesis. Its function is as follows. Catalyzes the formation of L-carnitine from gamma-butyrobetaine. This Rattus norvegicus (Rat) protein is Gamma-butyrobetaine dioxygenase (Bbox1).